The sequence spans 119 residues: Large ribosomal subunit protein bL20 (119 aa).

This sequence belongs to the bacterial ribosomal protein bL20 family.

Its function is as follows. Binds directly to 23S ribosomal RNA and is necessary for the in vitro assembly process of the 50S ribosomal subunit. It is not involved in the protein synthesizing functions of that subunit. In Clostridium acetobutylicum (strain ATCC 824 / DSM 792 / JCM 1419 / IAM 19013 / LMG 5710 / NBRC 13948 / NRRL B-527 / VKM B-1787 / 2291 / W), this protein is Large ribosomal subunit protein bL20.